The chain runs to 249 residues: Chitooligosaccharide deacetylase (249 aa).

Mg(2+) contacts are provided by His-61 and His-125.

This sequence belongs to the YdjC deacetylase family. ChbG subfamily. As to quaternary structure, homodimer. Requires Mg(2+) as cofactor.

The protein localises to the cytoplasm. The enzyme catalyses N,N'-diacetylchitobiose + H2O = N-acetyl-beta-D-glucosaminyl-(1-&gt;4)-D-glucosamine + acetate. The catalysed reaction is diacetylchitobiose-6'-phosphate + H2O = N'-monoacetylchitobiose-6'-phosphate + acetate. It functions in the pathway glycan degradation; chitin degradation. Functionally, involved in the degradation of chitin. ChbG is essential for growth on the acetylated chitooligosaccharides chitobiose and chitotriose but is dispensable for growth on cellobiose and chitosan dimer, the deacetylated form of chitobiose. Deacetylation of chitobiose-6-P and chitotriose-6-P is necessary for both the activation of the chb promoter by the regulatory protein ChbR and the hydrolysis of phosphorylated beta-glucosides by the phospho-beta-glucosidase ChbF. Catalyzes the removal of only one acetyl group from chitobiose-6-P to yield monoacetylchitobiose-6-P, the inducer of ChbR and the substrate of ChbF. This is Chitooligosaccharide deacetylase from Escherichia coli O7:K1 (strain IAI39 / ExPEC).